We begin with the raw amino-acid sequence, 172 residues long: Small ribosomal subunit protein uS5 (172 aa).

In terms of domain architecture, S5 DRBM spans 17–80 (LKEKMIAINR…EEARRNMTKV (64 aa)).

The protein belongs to the universal ribosomal protein uS5 family. Part of the 30S ribosomal subunit. Contacts proteins S4 and S8.

Functionally, with S4 and S12 plays an important role in translational accuracy. Its function is as follows. Located at the back of the 30S subunit body where it stabilizes the conformation of the head with respect to the body. This is Small ribosomal subunit protein uS5 from Polaromonas naphthalenivorans (strain CJ2).